A 557-amino-acid chain; its full sequence is Aerobic glycerol-3-phosphate dehydrogenase (557 aa).

An FAD-binding site is contributed by 21-49; the sequence is DVVIIGGGITGAGIALDASQRGMKVALVE.

This sequence belongs to the FAD-dependent glycerol-3-phosphate dehydrogenase family. FAD is required as a cofactor.

Its subcellular location is the cytoplasm. It catalyses the reaction a quinone + sn-glycerol 3-phosphate = dihydroxyacetone phosphate + a quinol. Its pathway is polyol metabolism; glycerol degradation via glycerol kinase pathway; glycerone phosphate from sn-glycerol 3-phosphate (aerobic route): step 1/1. This chain is Aerobic glycerol-3-phosphate dehydrogenase (glpD), found in Staphylococcus haemolyticus (strain JCSC1435).